Consider the following 454-residue polypeptide: Metalloprotease MTH_856 (454 aa).

Residues 92–115 are disordered; that stretch reads QVGSGAPSVDKTMVRSSRPPSDVP.

The protein belongs to the peptidase U62 family.

Its function is as follows. Probable metalloprotease. In Methanothermobacter thermautotrophicus (strain ATCC 29096 / DSM 1053 / JCM 10044 / NBRC 100330 / Delta H) (Methanobacterium thermoautotrophicum), this protein is Metalloprotease MTH_856.